Consider the following 140-residue polypeptide: Pro-vaccinia growth factor (140 aa).

Residues 1–18 (MLINYLMLLFAAMIIRSF) form the signal peptide. Residues 19–100 (ADSGNAIETT…SEKPNTTTSY (82 aa)) are Extracellular-facing. An N-linked (GlcNAc...) asparagine; by host glycan is attached at Asn34. One can recognise an EGF-like domain in the interval 41–81 (AIRLCGPEGDGYCLHGDCIHARDIDGMYCRCSHGYTGIRCQ). Disulfide bonds link Cys45–Cys58, Cys53–Cys69, and Cys71–Cys80. N-linked (GlcNAc...) asparagine; by host glycosylation occurs at Asn95. A helical membrane pass occupies residues 101–121 (IPSPGIMLVLVGIIIITCCLL). The Cytoplasmic portion of the chain corresponds to 122 to 140 (SVYRFTRRTKLPIQDMVVP).

It belongs to the orthopoxvirus OPG019 family. In terms of assembly, interacts with host EGFR.

The protein resides in the host membrane. It is found in the secreted. Stimulates cellular proliferation (hyperplasia)and mobility around infected cells to promote rapid and efficient spread of infection. This effect is beneficial for virus replication in vivo, because poxviruses replicate possibly better in proliferating cells than in quiescent cells. Acts by binding host EGFR, inducing its dimerization, autophosphorylation and leading to activation of several cellular pathways regulating cell proliferation or cell survival. The activation by host EGFR of mitogen activated protein kinases (MAPK) and extracellular-signal regulated kinases (ERK) are essential for the positive effect of vaccinia growth factor on poxvirus virulence in vivo. The protein is Pro-vaccinia growth factor (OPG019) of Homo sapiens (Human).